A 253-amino-acid chain; its full sequence is Acetylglutamate kinase (253 aa).

Substrate contacts are provided by residues 37-38 (GG), R59, and N149.

The protein belongs to the acetylglutamate kinase family. ArgB subfamily.

It is found in the cytoplasm. It catalyses the reaction N-acetyl-L-glutamate + ATP = N-acetyl-L-glutamyl 5-phosphate + ADP. Its pathway is amino-acid biosynthesis; L-arginine biosynthesis; N(2)-acetyl-L-ornithine from L-glutamate: step 2/4. Catalyzes the ATP-dependent phosphorylation of N-acetyl-L-glutamate. This is Acetylglutamate kinase from Rubrobacter xylanophilus (strain DSM 9941 / JCM 11954 / NBRC 16129 / PRD-1).